Reading from the N-terminus, the 412-residue chain is Serine hydroxymethyltransferase (412 aa).

Residues Leu120 and 124 to 126 each bind (6S)-5,6,7,8-tetrahydrofolate; that span reads GHL. At Lys229 the chain carries N6-(pyridoxal phosphate)lysine. 352-354 lines the (6S)-5,6,7,8-tetrahydrofolate pocket; that stretch reads SPF.

The protein belongs to the SHMT family. In terms of assembly, homodimer. It depends on pyridoxal 5'-phosphate as a cofactor.

Its subcellular location is the cytoplasm. It catalyses the reaction (6R)-5,10-methylene-5,6,7,8-tetrahydrofolate + glycine + H2O = (6S)-5,6,7,8-tetrahydrofolate + L-serine. Its pathway is one-carbon metabolism; tetrahydrofolate interconversion. It functions in the pathway amino-acid biosynthesis; glycine biosynthesis; glycine from L-serine: step 1/1. In terms of biological role, catalyzes the reversible interconversion of serine and glycine with tetrahydrofolate (THF) serving as the one-carbon carrier. This reaction serves as the major source of one-carbon groups required for the biosynthesis of purines, thymidylate, methionine, and other important biomolecules. Also exhibits THF-independent aldolase activity toward beta-hydroxyamino acids, producing glycine and aldehydes, via a retro-aldol mechanism. This is Serine hydroxymethyltransferase from Acetivibrio thermocellus (strain ATCC 27405 / DSM 1237 / JCM 9322 / NBRC 103400 / NCIMB 10682 / NRRL B-4536 / VPI 7372) (Clostridium thermocellum).